The chain runs to 225 residues: Interleukin-6 (225 aa).

The first 24 residues, 1–24 (MPSRLNVFWLCAAALAALLRCAPA), serve as a signal peptide directing secretion. Asn-98 carries N-linked (GlcNAc...) asparagine glycosylation.

The protein belongs to the IL-6 superfamily. In terms of assembly, component of a hexamer of two molecules each of IL6, IL6R and IL6ST; first binds to IL6R to associate with the signaling subunit IL6ST. In terms of tissue distribution, expressed in white muscle, skin, spleen, anterior intestine and stomach. Not expressed in brain, gill, head kidney, posterior intestine and adipose tissue.

Its subcellular location is the secreted. In terms of biological role, cytokine with a wide variety of biological functions in immunity, tissue regeneration, and metabolism. Binds to IL6R, then the complex associates to the signaling subunit IL6ST/gp130 to trigger the intracellular IL6-signaling pathway. The interaction with the membrane-bound IL6R and IL6ST stimulates 'classic signaling', whereas the binding of IL6 and soluble IL6R to IL6ST stimulates 'trans-signaling'. Alternatively, 'cluster signaling' occurs when membrane-bound IL6:IL6R complexes on transmitter cells activate IL6ST receptors on neighboring receiver cells. In Sparus aurata (Gilthead sea bream), this protein is Interleukin-6 (il6).